A 194-amino-acid polypeptide reads, in one-letter code: Troponin I 4 (194 aa).

The interval 1-27 (MSDVDADEARKMAERERKKEEVRKRLE) is disordered. Over residues 7–27 (DEARKMAERERKKEEVRKRLE) the composition is skewed to basic and acidic residues.

This sequence belongs to the troponin I family. In terms of tissue distribution, expression is detected only in pharyngeal muscle cells from embryos to adults.

Functionally, troponin I is the inhibitory subunit of troponin, the thin filament regulatory complex which confers calcium-sensitivity to muscle actomyosin ATPase activity. This is Troponin I 4 (tni-4) from Caenorhabditis elegans.